We begin with the raw amino-acid sequence, 285 residues long: Pseudouridine-5'-phosphate glycosidase (285 aa).

The active-site Proton donor is glutamate 17. Substrate is bound by residues lysine 77 and valine 97. A Mn(2+)-binding site is contributed by aspartate 126. Position 128–130 (128–130 (SQD)) interacts with substrate. Residue lysine 147 is the Nucleophile of the active site.

The protein belongs to the pseudouridine-5'-phosphate glycosidase family. As to quaternary structure, homotrimer. Mn(2+) serves as cofactor.

The catalysed reaction is D-ribose 5-phosphate + uracil = psi-UMP + H2O. Catalyzes the reversible cleavage of pseudouridine 5'-phosphate (PsiMP) to ribose 5-phosphate and uracil. Functions biologically in the cleavage direction, as part of a pseudouridine degradation pathway. The chain is Pseudouridine-5'-phosphate glycosidase from Thermotoga maritima (strain ATCC 43589 / DSM 3109 / JCM 10099 / NBRC 100826 / MSB8).